Consider the following 1135-residue polypeptide: Exportin-6-A (1135 aa).

Residues isoleucine 31–serine 97 enclose the Importin N-terminal domain.

It belongs to the exportin family. As to expression, expressed during meiotic maturation 2 hours after germinal vesicle break down (GVBD) and in unfertilized and fertilized eggs, but not in oocytes (at protein level). Expressed in somatic cells, in oocytes, during meiotic maturation and in unfertilized and fertilized eggs.

The protein localises to the nucleus. Its subcellular location is the cytoplasm. In terms of biological role, mediates the nuclear export of actin and profilin-actin complexes in somatic cells. Oocyte nuclei lack active actin export. This is Exportin-6-A (xpo6-a) from Xenopus laevis (African clawed frog).